Consider the following 294-residue polypeptide: MSNSNNVLKLGLPKGSLQDSTLELFANAGFHFSVQSRSYFPSIDDDELEAILIRAQEMARYVSQGAFDAGLTGKDWIIETDADVVEVADLVYSKASMRPVRWVLAVPESSPIQSVRDLEGKHIATEVVNITKKYLARNGVNASVEFSWGATEVKPPELADAIVEVTETGSSLRANKLRIVETILESNTKLIANKASWENPWKREKIENMAMLLQGAINAQGKVGLKMNAPKAGLNKLIESIPALRQPTISDLADNAWVAIEVIVDEKVVRHLIPDLKRAGAEGIFEYDINKLID.

This sequence belongs to the ATP phosphoribosyltransferase family. Long subfamily. It depends on Mg(2+) as a cofactor.

It localises to the cytoplasm. It catalyses the reaction 1-(5-phospho-beta-D-ribosyl)-ATP + diphosphate = 5-phospho-alpha-D-ribose 1-diphosphate + ATP. The protein operates within amino-acid biosynthesis; L-histidine biosynthesis; L-histidine from 5-phospho-alpha-D-ribose 1-diphosphate: step 1/9. With respect to regulation, feedback inhibited by histidine. Functionally, catalyzes the condensation of ATP and 5-phosphoribose 1-diphosphate to form N'-(5'-phosphoribosyl)-ATP (PR-ATP). Has a crucial role in the pathway because the rate of histidine biosynthesis seems to be controlled primarily by regulation of HisG enzymatic activity. This is ATP phosphoribosyltransferase from Chlorobaculum parvum (strain DSM 263 / NCIMB 8327) (Chlorobium vibrioforme subsp. thiosulfatophilum).